A 557-amino-acid chain; its full sequence is Fanconi anemia group C protein homolog (557 aa).

As to quaternary structure, belongs to the multisubunit FA complex composed of FANCA, FANCB, FANCC, FANCE, FANCF, FANCG, FANCL/PHF9 and FANCM. This complex may also include HSP70. Interacts with ZBTB32. Upon IFNG induction, interacts with STAT1. Interacts with CDK1. Interacts with EIF2AK2.

It is found in the nucleus. Its subcellular location is the cytoplasm. In terms of biological role, DNA repair protein that may operate in a postreplication repair or a cell cycle checkpoint function. May be implicated in interstrand DNA cross-link repair and in the maintenance of normal chromosome stability. Upon IFNG induction, may facilitate STAT1 activation by recruiting STAT1 to IFNGR1. The protein is Fanconi anemia group C protein homolog (Fancc) of Rattus norvegicus (Rat).